Consider the following 1848-residue polypeptide: Cellulose-binding protein A (1848 aa).

The signal sequence occupies residues 1–28; the sequence is MQKKKSLNLLLALMMVFALVLPSIPALA. One can recognise a CBM3 domain in the interval 29–190; the sequence is ATSSMSVEFY…GAKVLGTAPG (162 aa). 9 Cohesin domains span residues 291 to 428, 435 to 570, 668 to 801, 810 to 943, 952 to 1085, 1094 to 1227, 1236 to 1369, 1377 to 1511, and 1709 to 1847; these read VTAT…TVTI, MQIS…SVTI, VTAT…SVTI, VKAT…RLTI, and FAVK…SVKV.

The N-terminus is blocked. Post-translationally, glycosylated.

The protein resides in the secreted. In terms of biological role, binds to cellulose fibers and coordinates cellulase enzymes. This is Cellulose-binding protein A (cbpA) from Clostridium cellulovorans.